A 415-amino-acid polypeptide reads, in one-letter code: All trans-polyprenyl-diphosphate synthase PDSS1 (415 aa).

The interval 16 to 35 (PAARSPGPGSPGRAGPLGPS) is disordered. Positions 134, 137, and 173 each coordinate isopentenyl diphosphate. Positions 180 and 184 each coordinate Mg(2+). Arg-190 is an isopentenyl diphosphate binding site.

Belongs to the FPP/GGPP synthase family. Heterotetramer composed of 2 PDSS1/DPS1 and 2 PDSS2/DLP1 subunits. The cofactor is Mg(2+).

The protein localises to the mitochondrion. It catalyses the reaction 7 isopentenyl diphosphate + (2E,6E)-farnesyl diphosphate = all-trans-decaprenyl diphosphate + 7 diphosphate. It carries out the reaction 6 isopentenyl diphosphate + (2E,6E)-farnesyl diphosphate = all-trans-nonaprenyl diphosphate + 6 diphosphate. It functions in the pathway cofactor biosynthesis; ubiquinone biosynthesis. Functionally, heterotetrameric enzyme that catalyzes the condensation of farnesyl diphosphate (FPP), which acts as a primer, and isopentenyl diphosphate (IPP) to produce prenyl diphosphates of varying chain lengths and participates in the determination of the side chain of ubiquinone. Supplies nona and decaprenyl diphosphate, the precursors for the side chain of the isoprenoid quinones ubiquinone-9 (Q9)and ubiquinone-10 (Q10) respectively. The enzyme adds isopentenyl diphosphate molecules sequentially to farnesyl diphosphate with trans stereochemistry. The polypeptide is All trans-polyprenyl-diphosphate synthase PDSS1 (Homo sapiens (Human)).